Here is a 432-residue protein sequence, read N- to C-terminus: Ornithine decarboxylase, chloroplastic (432 aa).

Position 95 is an N6-(pyridoxal phosphate)lysine (Lys95). Residues Ser227, Gly265, and Glu298–Arg301 each bind pyridoxal 5'-phosphate. Tyr341 to Asp342 contributes to the substrate binding site. The active-site Proton donor; shared with dimeric partner is the Cys377. Residue Asp378 coordinates substrate. Residue Tyr406 coordinates pyridoxal 5'-phosphate.

Belongs to the Orn/Lys/Arg decarboxylase class-II family. In terms of assembly, homodimer. Only the dimer is catalytically active, as the active sites are constructed of residues from both monomers. Requires pyridoxal 5'-phosphate as cofactor.

It localises to the plastid. The protein localises to the chloroplast. The catalysed reaction is L-lysine + H(+) = cadaverine + CO2. It carries out the reaction L-ornithine + H(+) = putrescine + CO2. Its pathway is alkaloid biosynthesis; nicotine biosynthesis. The protein operates within amine and polyamine biosynthesis; putrescine biosynthesis via L-ornithine pathway; putrescine from L-ornithine: step 1/1. With respect to regulation, repressed by alpha-difluoromethylornithine (DFMO), 5,5'-dithiobis-(2-nitrobenzoic acid) (DTNB) and salicylaldehyde. Involved in the biosynthesis of pyridine alkaloid natural products, leading mainly to the production of anabasine, anatabine, nicotine and nornicotine, effective deterrents against herbivores with antiparasitic and pesticide properties (neurotoxins); nornicotine serves as the precursor in the synthesis of the carcinogen compound N'-nitrosonornicotine (NNN). Catalyzes the first and rate-limiting step of polyamine biosynthesis that converts ornithine into putrescine, which is the precursor for the polyamines, spermidine and spermine. Can also use, with a lower efficiency, L-lysine as substrate to produce cadaverine. Polyamines are essential for cell proliferation and are implicated in cellular processes, ranging from DNA replication to apoptosis. The polypeptide is Ornithine decarboxylase, chloroplastic (Nicotiana glutinosa (Tobacco)).